Reading from the N-terminus, the 585-residue chain is DNA ligase (585 aa).

Glu278 provides a ligand contact to ATP. Lys280 serves as the catalytic N6-AMP-lysine intermediate. ATP is bound by residues Arg285, Arg301, Glu330, Phe370, Arg444, and Lys450.

Belongs to the ATP-dependent DNA ligase family. Mg(2+) serves as cofactor.

The enzyme catalyses ATP + (deoxyribonucleotide)n-3'-hydroxyl + 5'-phospho-(deoxyribonucleotide)m = (deoxyribonucleotide)n+m + AMP + diphosphate.. In terms of biological role, DNA ligase that seals nicks in double-stranded DNA during DNA replication, DNA recombination and DNA repair. In Haloferax volcanii (strain ATCC 29605 / DSM 3757 / JCM 8879 / NBRC 14742 / NCIMB 2012 / VKM B-1768 / DS2) (Halobacterium volcanii), this protein is DNA ligase.